The sequence spans 260 residues: Zinc finger protein 575 (260 aa).

The interval 22–81 is disordered; it reads PGLGPGRWLLPGAHQPSCPPAPHQGPLQKPSQSAPGPTASASAPPRPRRRPPPQRPHRCP. Low complexity predominate over residues 51–64; it reads PSQSAPGPTASASA. A compositionally biased stretch (basic residues) spans 67-78; sequence RPRRRPPPQRPH. 6 consecutive C2H2-type zinc fingers follow at residues 78–100, 106–128, 134–156, 162–184, 192–214, and 228–255; these read HRCPDCDKAFSYPSKLATHRLAH, HPCPDCPKAFSYPSKLAAHRLTH, HPCPHCPKAFGHRSKLAAHLWTH, YPCPDCPKSFCYPSKLAAHRHTH, YPCPHCPKAFSFPSKLAAHRLCH, and HRCSSCGQAFGQRRLLLLHQRSHHQVEH.

It belongs to the krueppel C2H2-type zinc-finger protein family.

The protein resides in the nucleus. Its function is as follows. May be involved in transcriptional regulation. This Macaca fascicularis (Crab-eating macaque) protein is Zinc finger protein 575 (ZNF575).